Reading from the N-terminus, the 153-residue chain is 6,7-dimethyl-8-ribityllumazine synthase (153 aa).

5-amino-6-(D-ribitylamino)uracil contacts are provided by residues tryptophan 22, 56–58 (SYE), and 80–82 (AVI). 85 to 86 (AT) is a (2S)-2-hydroxy-3-oxobutyl phosphate binding site. The active-site Proton donor is histidine 88. Leucine 113 contributes to the 5-amino-6-(D-ribitylamino)uracil binding site. Residue arginine 127 participates in (2S)-2-hydroxy-3-oxobutyl phosphate binding.

The protein belongs to the DMRL synthase family.

The catalysed reaction is (2S)-2-hydroxy-3-oxobutyl phosphate + 5-amino-6-(D-ribitylamino)uracil = 6,7-dimethyl-8-(1-D-ribityl)lumazine + phosphate + 2 H2O + H(+). Its pathway is cofactor biosynthesis; riboflavin biosynthesis; riboflavin from 2-hydroxy-3-oxobutyl phosphate and 5-amino-6-(D-ribitylamino)uracil: step 1/2. Functionally, catalyzes the formation of 6,7-dimethyl-8-ribityllumazine by condensation of 5-amino-6-(D-ribitylamino)uracil with 3,4-dihydroxy-2-butanone 4-phosphate. This is the penultimate step in the biosynthesis of riboflavin. This is 6,7-dimethyl-8-ribityllumazine synthase from Herpetosiphon aurantiacus (strain ATCC 23779 / DSM 785 / 114-95).